The sequence spans 162 residues: Phospholipase A and acyltransferase 2 (162 aa).

Over 1 to 133 (MALARPRPRL…VSRSDQVTGA (133 aa)) the chain is Cytoplasmic. In terms of domain architecture, LRAT spans 13–129 (LIEISRFGYA…LRYGVSRSDQ (117 aa)). Catalysis depends on residues H23 and H35. C113 acts as the Acyl-thioester intermediate in catalysis. A helical transmembrane segment spans residues 134–154 (VTTVGVAAGLLAAASLVGILL). Residues 155-162 (ARSKRERQ) lie on the Lumenal side of the membrane.

It belongs to the H-rev107 family. In terms of tissue distribution, expressed in liver, kidney, small intestine testis and colon. Undetectable in testis, placenta, salivary gland and fetal brain.

Its subcellular location is the cytoplasm. It is found in the membrane. It carries out the reaction a 1,2-diacyl-sn-glycero-3-phosphocholine + H2O = a 1-acyl-sn-glycero-3-phosphocholine + a fatty acid + H(+). The catalysed reaction is a 1,2-diacyl-sn-glycero-3-phosphocholine + H2O = a 2-acyl-sn-glycero-3-phosphocholine + a fatty acid + H(+). The enzyme catalyses a 1,2-diacyl-sn-glycero-3-phosphoethanolamine + a 1,2-diacyl-sn-glycero-3-phosphocholine = an N-acyl-1,2-diacyl-sn-glycero-3-phosphoethanolamine + a 1-acyl-sn-glycero-3-phosphocholine + H(+). It catalyses the reaction a 1,2-diacyl-sn-glycero-3-phosphoethanolamine + a 1,2-diacyl-sn-glycero-3-phosphocholine = an N-acyl-1,2-diacyl-sn-glycero-3-phosphoethanolamine + a 2-acyl-sn-glycero-3-phosphocholine + H(+). It carries out the reaction 1,2-dihexadecanoyl-sn-glycero-3-phosphocholine + H2O = 1-hexadecanoyl-sn-glycero-3-phosphocholine + hexadecanoate + H(+). The catalysed reaction is 1,2-dihexadecanoyl-sn-glycero-3-phosphocholine + H2O = 2-hexadecanoyl-sn-glycero-3-phosphocholine + hexadecanoate + H(+). The enzyme catalyses 1-hexadecanoyl-2-(9Z-octadecenoyl)-sn-glycero-3-phosphocholine + H2O = 2-(9Z-octadecenoyl)-sn-glycero-3-phosphocholine + hexadecanoate + H(+). It catalyses the reaction 1-hexadecanoyl-2-(9Z-octadecenoyl)-sn-glycero-3-phosphocholine + H2O = 1-hexadecanoyl-sn-glycero-3-phosphocholine + (9Z)-octadecenoate + H(+). It carries out the reaction 1-hexadecanoyl-2-(5Z,8Z,11Z,14Z-eicosatetraenoyl)-sn-glycero-3-phosphocholine + H2O = 2-(5Z,8Z,11Z,14Z)-eicosatetraenoyl-sn-glycero-3-phosphocholine + hexadecanoate + H(+). The catalysed reaction is 1-hexadecanoyl-2-(9Z,12Z-octadecadienoyl)-sn-glycero-3-phosphoethanolamine + H2O = 1-hexadecanoyl-sn-glycero-3-phosphoethanolamine + (9Z,12Z)-octadecadienoate + H(+). The enzyme catalyses 1-hexadecanoyl-2-(9Z,12Z-octadecadienoyl)-sn-glycero-3-phosphoethanolamine + H2O = 2-(9Z,12Z)-octadecadienoyl-sn-glycero-3-phosphoethanolamine + hexadecanoate + H(+). It catalyses the reaction 1-hexadecanoyl-2-(5Z,8Z,11Z,14Z-eicosatetraenoyl)-sn-glycero-3-phosphoethanolamine + H2O = 1-hexadecanoyl-sn-glycero-3-phosphoethanolamine + (5Z,8Z,11Z,14Z)-eicosatetraenoate + H(+). It carries out the reaction 1-hexadecanoyl-2-(5Z,8Z,11Z,14Z-eicosatetraenoyl)-sn-glycero-3-phosphoethanolamine + H2O = 2-(5Z,8Z,11Z,14Z)-eicosatetraenoyl-sn-glycero-3-phosphoethanolamine + hexadecanoate + H(+). The catalysed reaction is 1,2-di-(9Z-octadecenoyl)-sn-glycero-3-phosphoethanolamine + 1,2-dihexadecanoyl-sn-glycero-3-phosphocholine = N-hexadecanoyl-1,2-di-(9Z-octadecenoyl)-sn-glycero-3-phosphoethanolamine + 2-hexadecanoyl-sn-glycero-3-phosphocholine + H(+). The enzyme catalyses 1,2-di-(9Z-octadecenoyl)-sn-glycero-3-phosphoethanolamine + 1,2-dihexadecanoyl-sn-glycero-3-phosphocholine = N-hexadecanoyl-1,2-di-(9Z-octadecenoyl)-sn-glycero-3-phosphoethanolamine + 1-hexadecanoyl-sn-glycero-3-phosphocholine + H(+). It catalyses the reaction 1-hexanoyl-2-acyl-sn-glycero-3-phosphocholine + H2O = 1-hexanoyl-sn-glycero-3-phosphocholine + a fatty acid + H(+). It carries out the reaction 1,2-diheptadecanoyl-sn-glycero-3-phosphoethanolamine + 1-(9Z-octadecenoyl)-2-hexadecanoyl-sn-glycero-3-phosphocholine = 1,2-diheptadecanoyl-sn-glycero-3-phospho-N-hexadecanoyl-ethanolamine + 1-(9Z-octadecenoyl)-sn-glycero-3-phosphocholine + H(+). The catalysed reaction is 1,2-diheptadecanoyl-sn-glycero-3-phosphoethanolamine + 1-(9Z-octadecenoyl)-2-hexadecanoyl-sn-glycero-3-phosphocholine = 1,2-diheptadecanoyl-sn-glycero-3-phospho-N-(9Z-octadecenoyl)-ethanolamine + 2-hexadecanoyl-sn-glycero-3-phosphocholine + H(+). The enzyme catalyses 1,2-dihexanoyl-sn-glycero-3-phosphocholine + 1,2-diheptanoyl-sn-glycero-3-phosphocholine = 1-heptanoyl-2-hexanoyl-sn-glycero-3-phosphocholine + 1-hexanoyl-2-heptanoyl-sn-glycero-3-phosphocholine. It catalyses the reaction 1,2-diheptanoyl-sn-glycero-3-phosphocholine + 1,2-dihexadecanoyl-sn-glycero-3-phosphocholine = 1-hexadecanoyl-2-heptanoyl-sn-glycero-3-phosphocholine + 1-heptanoyl-2-hexadecanoyl-sn-glycero-3-phosphocholine. It carries out the reaction 1,2-dihexanoyl-sn-glycero-3-phosphoethanolamine + 1,2-diheptanoyl-sn-glycero-3-phosphocholine = 1-heptanoyl-2-hexanoyl-sn-glycero-3-phosphoethanolamine + 1-hexanoyl-2-heptanoyl-sn-glycero-3-phosphocholine. The catalysed reaction is 1-hexanoyl-2-acyl-sn-glycero-3-phosphocholine + H2O = hexanoate + a 2-acyl-sn-glycero-3-phosphocholine + H(+). The enzyme catalyses 1,2-dihexanoyl-sn-glycero-3-phosphoethanolamine + 2-heptanoyl-sn-glycero-3-phosphocholine = hexanoyl-sn-glycero-3-phosphoethanolamine + 1-hexanoyl-2-heptanoyl-sn-glycero-3-phosphocholine. Functionally, exhibits both phospholipase A1/2 and acyltransferase activities. Shows phospholipase A1 (PLA1) and A2 (PLA2) activity, catalyzing the calcium-independent release of fatty acids from the sn-1 or sn-2 position of glycerophospholipids. For most substrates, PLA1 activity is much higher than PLA2 activity. Shows O-acyltransferase activity, catalyzing the transfer of a fatty acyl group from glycerophospholipid to the hydroxyl group of lysophospholipid. Shows N-acyltransferase activity, catalyzing the calcium-independent transfer of a fatty acyl group at the sn-1 position of phosphatidylcholine (PC) and other glycerophospholipids to the primary amine of phosphatidylethanolamine (PE), forming N-acylphosphatidylethanolamine (NAPE), which serves as precursor for N-acylethanolamines (NAEs). Catalyzes N-acylation of PE using both sn-1 and sn-2 palmitoyl groups of PC as acyl donor. Exhibits high phospholipase A1/2 activity and low N-acyltransferase activity. The sequence is that of Phospholipase A and acyltransferase 2 from Homo sapiens (Human).